The sequence spans 405 residues: Mevalonate 3,5-bisphosphate decarboxylase (405 aa).

The protein belongs to the mevalonate 3,5-bisphosphate decarboxylase family. Homodimer.

It carries out the reaction (R)-3,5-bisphosphomevalonate + H(+) = isopentenyl phosphate + phosphate + CO2. It functions in the pathway isoprenoid biosynthesis; isopentenyl diphosphate biosynthesis via mevalonate pathway. In terms of biological role, catalyzes the ATP-independent decarboxylation of (R)-mevalonate 3,5-bisphosphate to isopentenyl phosphate. Functions in an alternative mevalonate pathway, only present in extreme acidophiles of the Thermoplasmatales order, which passes through mevalonate 3-phosphate rather than mevalonate 5-phosphate. The sequence is that of Mevalonate 3,5-bisphosphate decarboxylase from Thermoplasma acidophilum (strain ATCC 25905 / DSM 1728 / JCM 9062 / NBRC 15155 / AMRC-C165).